Reading from the N-terminus, the 415-residue chain is Esterase FrsA (415 aa).

The protein belongs to the FrsA family.

The enzyme catalyses a carboxylic ester + H2O = an alcohol + a carboxylate + H(+). In terms of biological role, catalyzes the hydrolysis of esters. The sequence is that of Esterase FrsA from Serratia proteamaculans (strain 568).